The chain runs to 853 residues: DNA mismatch repair protein MutS (853 aa).

614–621 (GPNMGGKS) is a binding site for ATP.

It belongs to the DNA mismatch repair MutS family.

In terms of biological role, this protein is involved in the repair of mismatches in DNA. It is possible that it carries out the mismatch recognition step. This protein has a weak ATPase activity. In Escherichia coli (strain SMS-3-5 / SECEC), this protein is DNA mismatch repair protein MutS.